The primary structure comprises 223 residues: Interleukin-12 subunit alpha (223 aa).

Residues 1–23 (MCPSARSLLLLASLVLLEHLGSA) form the signal peptide. Residues N41, N79, N121, and N176 are each glycosylated (N-linked (GlcNAc...) asparagine). 2 cysteine pairs are disulfide-bonded: C66–C200 and C87–C125.

The protein belongs to the IL-6 superfamily. In terms of assembly, heterodimer with IL12B; disulfide-linked. This heterodimer is known as interleukin IL-12. Heterodimer with EBI3/IL27B; not disulfide-linked. This heterodimer is known as interleukin IL-35. Interacts with NBR1; this interaction promotes IL-12 secretion.

It localises to the secreted. Functionally, heterodimerizes with IL12B to form the IL-12 cytokine or with EBI3/IL27B to form the IL-35 cytokine. IL-12 is primarily produced by professional antigen-presenting cells (APCs) such as B-cells and dendritic cells (DCs) as well as macrophages and granulocytes and regulates T-cell and natural killer-cell responses, induces the production of interferon-gamma (IFN-gamma), favors the differentiation of T-helper 1 (Th1) cells and is an important link between innate resistance and adaptive immunity. Mechanistically, exerts its biological effects through a receptor composed of IL12R1 and IL12R2 subunits. Binding to the receptor results in the rapid tyrosine phosphorylation of a number of cellular substrates including the JAK family kinases TYK2 and JAK2. In turn, recruited STAT4 gets phosphorylated and translocates to the nucleus where it regulates cytokine/growth factor responsive genes. As part of IL-35, plays essential roles in maintaining the immune homeostasis of the liver microenvironment and also functions as an immune-suppressive cytokine. Mediates biological events through unconventional receptors composed of IL12RB2 and gp130/IL6ST heterodimers or homodimers. Signaling requires the transcription factors STAT1 and STAT4, which form a unique heterodimer that binds to distinct DNA sites. The polypeptide is Interleukin-12 subunit alpha (IL12A) (Marmota monax (Woodchuck)).